The primary structure comprises 174 residues: Co-chaperone protein HscB homolog (174 aa).

Residues 2–74 form the J domain; sequence NYFELFNLPV…IRRAEHMLAL (73 aa).

It belongs to the HscB family. Interacts with HscA and stimulates its ATPase activity.

Its function is as follows. Co-chaperone involved in the maturation of iron-sulfur cluster-containing proteins. Seems to help targeting proteins to be folded toward HscA. In Shewanella amazonensis (strain ATCC BAA-1098 / SB2B), this protein is Co-chaperone protein HscB homolog.